The sequence spans 33 residues: Kappa-theraphotoxin-Pg2a (33 aa).

3 disulfides stabilise this stretch: Cys-2/Cys-16, Cys-9/Cys-21, and Cys-15/Cys-28.

In terms of tissue distribution, expressed by the venom gland.

It localises to the secreted. Its function is as follows. Gating modifier of Kv2.1/KCNB1 channels. This chain is Kappa-theraphotoxin-Pg2a, found in Chilobrachys guangxiensis (Chinese earth tiger tarantula).